A 490-amino-acid chain; its full sequence is MINHSLKQLADMLASKEISSVELTQEYLNRIAQLNPEINAYITVNPELSLAQAQAADQRIANGDAGPLTGIPIAQKDIFCAKGWRTTCGSRMLENFIAPYDAGIIERFNAAGAVNLGKTNMDEFAMGSSNETSYFGKVQNPWDRSRVPGGSSGGSAAAVAARLCAAATGTDTGGSIRQPASLCGLSGLKPTYGLASRYGMIAFASSLDQAGPMAHSAEDMALMMNVMTGFDERDSTSLQREKEDYTRELGKSLAGIRIGLPKEYFAEGLDAGVAKVIEAAVDEYRKLGAEIVEVTLPNTMLSIPVYYVLAPAEASSNLSRYDGVRFGHRAAEYDDLMDMYCKSRAEGFGEEVKRRILIGTYVLSAGYYDAYYLKAQQIRRLIAEDFAKAFEQCDLILGPTAPSTAFKSGEKADDPVSMYLQDIYTIAVNLAGLPGMSIPAGFAPAADGVELPVGLQIIGNYFDEARMLNAGHVYQQVTDWHTRMPEGIAS.

Active-site charge relay system residues include lysine 76 and serine 151. The active-site Acyl-ester intermediate is serine 175.

The protein belongs to the amidase family. GatA subfamily. In terms of assembly, heterotrimer of A, B and C subunits.

It carries out the reaction L-glutamyl-tRNA(Gln) + L-glutamine + ATP + H2O = L-glutaminyl-tRNA(Gln) + L-glutamate + ADP + phosphate + H(+). In terms of biological role, allows the formation of correctly charged Gln-tRNA(Gln) through the transamidation of misacylated Glu-tRNA(Gln) in organisms which lack glutaminyl-tRNA synthetase. The reaction takes place in the presence of glutamine and ATP through an activated gamma-phospho-Glu-tRNA(Gln). In Methylobacillus flagellatus (strain ATCC 51484 / DSM 6875 / VKM B-1610 / KT), this protein is Glutamyl-tRNA(Gln) amidotransferase subunit A.